Reading from the N-terminus, the 109-residue chain is uncharacterized protein (109 aa).

Residues 12-32 (PNILIKGVYIFVLYGMCICIV) traverse the membrane as a helical segment.

The protein resides in the membrane. This is an uncharacterized protein from Saccharomyces cerevisiae (strain ATCC 204508 / S288c) (Baker's yeast).